Here is a 385-residue protein sequence, read N- to C-terminus: MTTIFYAEPELVIAYGRKVLFLNPNDLQIFKDIELPADLTSCGLKITAPEISEEQQSTSEGKGTDGGKVEVAILNVCYSPDRQLIALTTAGQKALLLYKSRPEHAKLLSVRALARASSAMTFAADSSSVLVTDKTGDCYQYDCVEVNALPRLLLGHLSIVYDILWTPDQKHIITSDRDDKIRVTNYPATFDIHSYCLGHKEFVSGLALLTEEHLLSVSGDKTLRLWNYLSGMELLHHDLPAPAVRLHMRELLPAKRYQAAVQFYDHIEAIGLYELEQTNNIWTVACEQLVRAEAGSWNISNFALTSDMIYVAGAVNEHLALRVYNASDGEQAKTVPAGWLDMVTGSFSDQTCVPEDLSVWFKKRYDNVSDYMERKKRRIEGQQQK.

WD repeat units lie at residues 68 to 108 (KVEV…AKLL), 155 to 194 (GHLS…DIHS), and 198 to 236 (GHKE…ELLH).

This sequence belongs to the WD repeat TRM82 family. In terms of assembly, forms a heterodimer with the catalytic subunit Mettl1. Interacts with mei-P26 and weakly interacts with bgcn; required for the function or formation of the mei-P26-bgcn-bam-sxl complex. Interacts with nanos; may be involved in mei-P26-dependent derepression of the BMP signaling pathway. Interacts with Myc; the interaction may be mediated by mei-P26 and may be involved in the regulation of ribosome biogenesis. In terms of tissue distribution, in testis, it is present at high level in hub cells, a niche for germline stem cells of testis. Ubiquitously expressed in all testicular cells throughout spermatogenesis. Ubiquitously expressed in all germline and somatic cells of the ovary.

The protein resides in the nucleus. The protein localises to the cytoplasm. The protein operates within tRNA modification; N(7)-methylguanine-tRNA biosynthesis. Functionally, required for the Mettl1-dependent formation of N(7)-methylguanine at position 46 (m7G46) in tRNA. In the Mettl1-wuho methyltransferase complex, it is required to stabilize and induce conformational changes of the catalytic subunit. Required for binding of nanos mRNA and repression of translation by the mei-P26-bgcn-bam-sxl complex. May cooperate with mei-P26 and nanos to derepress the BMP signaling pathway. May cooperate with mei-P26 to suppress expression of a subset of microRNAs. May cooperate with mei-P26 to regulate bam expression levels in germline cells during gametogenesis. Required to promote mitosis to meiosis transition during gametogenesis. May regulate germline cell division in part by regulating ribosome biogenesis. In Drosophila grimshawi (Hawaiian fruit fly), this protein is tRNA (guanine-N(7)-)-methyltransferase non-catalytic subunit wuho.